Here is a 367-residue protein sequence, read N- to C-terminus: Phosphoribosylaminoimidazole-succinocarboxamide synthase (367 aa).

It belongs to the SAICAR synthetase family.

It carries out the reaction 5-amino-1-(5-phospho-D-ribosyl)imidazole-4-carboxylate + L-aspartate + ATP = (2S)-2-[5-amino-1-(5-phospho-beta-D-ribosyl)imidazole-4-carboxamido]succinate + ADP + phosphate + 2 H(+). The protein operates within purine metabolism; IMP biosynthesis via de novo pathway; 5-amino-1-(5-phospho-D-ribosyl)imidazole-4-carboxamide from 5-amino-1-(5-phospho-D-ribosyl)imidazole-4-carboxylate: step 1/2. This Colwellia psychrerythraea (strain 34H / ATCC BAA-681) (Vibrio psychroerythus) protein is Phosphoribosylaminoimidazole-succinocarboxamide synthase.